Consider the following 302-residue polypeptide: Putative gluconeogenesis factor (302 aa).

Belongs to the gluconeogenesis factor family.

It is found in the cytoplasm. Functionally, required for morphogenesis under gluconeogenic growth conditions. In Salmonella typhimurium (strain LT2 / SGSC1412 / ATCC 700720), this protein is Putative gluconeogenesis factor (ybhK).